The primary structure comprises 327 residues: 2-keto-3-deoxygluconate permease (327 aa).

The next 10 membrane-spanning stretches (helical) occupy residues 10–30, 42–62, 73–93, 95–115, 139–159, 163–183, 199–219, 224–244, 254–274, and 289–309; these read IPGG…TFSP, GMIT…GASI, KSGT…AIAS, IIPE…LALV, AGAF…IILG, IASF…VGFA, VQTL…LTVI, LLGI…LIIA, TAGI…VLIA, and SLVA…TSIW.

The protein belongs to the KdgT transporter family.

The protein resides in the cell inner membrane. The enzyme catalyses 2-dehydro-3-deoxy-D-gluconate(in) + H(+)(in) = 2-dehydro-3-deoxy-D-gluconate(out) + H(+)(out). In terms of biological role, catalyzes the proton-dependent uptake of 2-keto-3-deoxygluconate (KDG) into the cell. In Escherichia coli O7:K1 (strain IAI39 / ExPEC), this protein is 2-keto-3-deoxygluconate permease.